Reading from the N-terminus, the 472-residue chain is MTIAIPFDNSYARLPGGFYTAQAPQPVRAPRLVAFNADLARLLGIAPGEVEEMAQVFAGNAVPQGAEPLAQLYSGHQFGNYNPQLGDGRAILLGEVLGSDGIRRDIQLKGAGRTPYSRGGDGRAWLGPVLREYVVSEAMAALGIPTTRALAAVETGETVRRESALPGAVLTRVAQSHLRVGTFQVFAARGEIAHLKRLTDYAIARHYPDAQGPMGLLAAVRDAQARLIARWMGVGFIHGVMNTDNSSIAGETIDYGPCAFMDTYHPDTVYSSIDRYGRYAYSNQPDIAVWNLAQLATALIQQAEDKEAVVEEATEIVHAMPELLERAWLEVFAAKIGIARPGEGDKALVSELLTRMAREQADFTNTFRALGAPRARDQFTDPTAYDSWAEDWRQRLTQEATPEAVIRAANPAFIPRNHRIEQMITAAVEGDYTLFERLNTVLARPYADQPDHIDLTRPPSASEIVPATFCGT.

Residues Gly-86, Gly-88, Arg-89, Lys-109, Asp-121, Gly-122, Arg-172, and Arg-179 each contribute to the ATP site. Residue Asp-244 is the Proton acceptor of the active site. Asn-245 and Asp-254 together coordinate Mg(2+). Asp-254 serves as a coordination point for ATP.

The protein belongs to the SELO family. It depends on Mg(2+) as a cofactor. Requires Mn(2+) as cofactor.

It carries out the reaction L-seryl-[protein] + ATP = 3-O-(5'-adenylyl)-L-seryl-[protein] + diphosphate. It catalyses the reaction L-threonyl-[protein] + ATP = 3-O-(5'-adenylyl)-L-threonyl-[protein] + diphosphate. The enzyme catalyses L-tyrosyl-[protein] + ATP = O-(5'-adenylyl)-L-tyrosyl-[protein] + diphosphate. The catalysed reaction is L-histidyl-[protein] + UTP = N(tele)-(5'-uridylyl)-L-histidyl-[protein] + diphosphate. It carries out the reaction L-seryl-[protein] + UTP = O-(5'-uridylyl)-L-seryl-[protein] + diphosphate. It catalyses the reaction L-tyrosyl-[protein] + UTP = O-(5'-uridylyl)-L-tyrosyl-[protein] + diphosphate. Nucleotidyltransferase involved in the post-translational modification of proteins. It can catalyze the addition of adenosine monophosphate (AMP) or uridine monophosphate (UMP) to a protein, resulting in modifications known as AMPylation and UMPylation. This is Protein nucleotidyltransferase YdiU from Ruegeria pomeroyi (strain ATCC 700808 / DSM 15171 / DSS-3) (Silicibacter pomeroyi).